A 354-amino-acid polypeptide reads, in one-letter code: Chorismate synthase (354 aa).

Arg-46 lines the NADP(+) pocket. FMN is bound by residues 123–125, 233–234, Gly-273, 288–292, and Arg-314; these read RVS, NG, and KPTPS.

This sequence belongs to the chorismate synthase family. In terms of assembly, homotetramer. It depends on FMNH2 as a cofactor.

The enzyme catalyses 5-O-(1-carboxyvinyl)-3-phosphoshikimate = chorismate + phosphate. It functions in the pathway metabolic intermediate biosynthesis; chorismate biosynthesis; chorismate from D-erythrose 4-phosphate and phosphoenolpyruvate: step 7/7. Functionally, catalyzes the anti-1,4-elimination of the C-3 phosphate and the C-6 proR hydrogen from 5-enolpyruvylshikimate-3-phosphate (EPSP) to yield chorismate, which is the branch point compound that serves as the starting substrate for the three terminal pathways of aromatic amino acid biosynthesis. This reaction introduces a second double bond into the aromatic ring system. This is Chorismate synthase from Campylobacter curvus (strain 525.92).